A 383-amino-acid chain; its full sequence is Succinyl-diaminopimelate desuccinylase (383 aa).

Histidine 74 contacts Zn(2+). Aspartate 76 is a catalytic residue. A Zn(2+)-binding site is contributed by aspartate 107. Catalysis depends on glutamate 141, which acts as the Proton acceptor. Zn(2+) is bound by residues glutamate 142, glutamate 170, and histidine 356.

Belongs to the peptidase M20A family. DapE subfamily. Homodimer. Zn(2+) is required as a cofactor. Co(2+) serves as cofactor.

It catalyses the reaction N-succinyl-(2S,6S)-2,6-diaminopimelate + H2O = (2S,6S)-2,6-diaminopimelate + succinate. Its pathway is amino-acid biosynthesis; L-lysine biosynthesis via DAP pathway; LL-2,6-diaminopimelate from (S)-tetrahydrodipicolinate (succinylase route): step 3/3. Catalyzes the hydrolysis of N-succinyl-L,L-diaminopimelic acid (SDAP), forming succinate and LL-2,6-diaminopimelate (DAP), an intermediate involved in the bacterial biosynthesis of lysine and meso-diaminopimelic acid, an essential component of bacterial cell walls. The sequence is that of Succinyl-diaminopimelate desuccinylase from Polynucleobacter necessarius subsp. necessarius (strain STIR1).